Reading from the N-terminus, the 387-residue chain is Protein PHYTOCHROME KINASE SUBSTRATE 3 (387 aa).

3 disordered regions span residues 1-21 (MDAEKKSAHFRQISSYKPQLL), 74-128 (HEKE…CNSQ), and 242-271 (LSTKNNNHNNNGNNSSMSSNTQEEETASVA). Polar residues predominate over residues 12–21 (QISSYKPQLL). Positions 74-83 (HEKENTHDHP) are enriched in basic and acidic residues. Residues 114–128 (HGTPSVRSESSCNSQ) show a composition bias toward polar residues. Positions 242–261 (LSTKNNNHNNNGNNSSMSSN) are enriched in low complexity.

It belongs to the PKS family.

In terms of biological role, probably involved in the phytochrome signaling pathway. In Arabidopsis thaliana (Mouse-ear cress), this protein is Protein PHYTOCHROME KINASE SUBSTRATE 3 (PKS3).